The sequence spans 102 residues: UPF0213 protein in potE 3'region (102 aa).

The 76-residue stretch at 6–81 (SPWHLYMLRL…KQLSKTQKER (76 aa)) folds into the GIY-YIG domain.

Belongs to the UPF0213 family.

In Serratia liquefaciens, this protein is UPF0213 protein in potE 3'region.